The sequence spans 583 residues: 2-succinyl-5-enolpyruvyl-6-hydroxy-3-cyclohexene-1-carboxylate synthase (583 aa).

The protein belongs to the TPP enzyme family. MenD subfamily. Homodimer. Requires Mg(2+) as cofactor. Mn(2+) serves as cofactor. The cofactor is thiamine diphosphate.

It carries out the reaction isochorismate + 2-oxoglutarate + H(+) = 5-enolpyruvoyl-6-hydroxy-2-succinyl-cyclohex-3-ene-1-carboxylate + CO2. It functions in the pathway quinol/quinone metabolism; 1,4-dihydroxy-2-naphthoate biosynthesis; 1,4-dihydroxy-2-naphthoate from chorismate: step 2/7. Its pathway is cofactor biosynthesis; phylloquinone biosynthesis. In terms of biological role, catalyzes the thiamine diphosphate-dependent decarboxylation of 2-oxoglutarate and the subsequent addition of the resulting succinic semialdehyde-thiamine pyrophosphate anion to isochorismate to yield 2-succinyl-5-enolpyruvyl-6-hydroxy-3-cyclohexene-1-carboxylate (SEPHCHC). The polypeptide is 2-succinyl-5-enolpyruvyl-6-hydroxy-3-cyclohexene-1-carboxylate synthase (Nostoc sp. (strain PCC 7120 / SAG 25.82 / UTEX 2576)).